The following is a 105-amino-acid chain: UPF0145 protein jk0060 (105 aa).

It belongs to the UPF0145 family.

This is UPF0145 protein jk0060 from Corynebacterium jeikeium (strain K411).